A 208-amino-acid chain; its full sequence is NAD(P)H dehydrogenase (quinone) (208 aa).

Residues valine 4–valine 192 form the Flavodoxin-like domain. Residues serine 10 to valine 15 and threonine 78 to phenylalanine 80 each bind FMN. An NAD(+)-binding site is contributed by tyrosine 12. Substrate is bound at residue tryptophan 98. FMN-binding positions include serine 113–glycine 119 and histidine 134. Residues tyrosine 161 to aspartate 183 are disordered.

The protein belongs to the WrbA family. FMN serves as cofactor.

The enzyme catalyses a quinone + NADH + H(+) = a quinol + NAD(+). It catalyses the reaction a quinone + NADPH + H(+) = a quinol + NADP(+). The protein is NAD(P)H dehydrogenase (quinone) of Paracoccus denitrificans (strain Pd 1222).